We begin with the raw amino-acid sequence, 606 residues long: Kelch-like protein 41 (606 aa).

Phosphoserine is present on serine 3. A BTB domain is found at 33 to 100; sequence IDCTLKAGDK…LYSASIDLND (68 aa). Residues 135-237 enclose the BACK domain; sequence CLAILRLGLL…TEKYFKDHVE (103 aa). Kelch repeat units lie at residues 346 to 398, 399 to 447, 448 to 495, 497 to 542, and 544 to 599; these read QIYV…EVDD, KIYV…SHKG, MIYC…VHKG, IVIA…SLAG, and LYAI…TRLN.

Interacts with NRAP. Interacts with LASP1. Part of a complex that contains CUL3, RBX1 and KLHL41. In terms of processing, ubiquitinated by E3 ubiquitin ligase complex formed by CUL3 and RBX1 and probably targeted for proteasome-independent degradation. Quinone-induced oxidative stress increases its ubiquitination. As to expression, sarcomeric muscle.

It localises to the cytoplasm. Its subcellular location is the cytoskeleton. It is found in the cell projection. The protein localises to the pseudopodium. The protein resides in the ruffle. It localises to the myofibril. Its subcellular location is the sarcomere. It is found in the m line. The protein localises to the sarcoplasmic reticulum membrane. The protein resides in the endoplasmic reticulum membrane. Functionally, involved in skeletal muscle development and differentiation. Regulates proliferation and differentiation of myoblasts and plays a role in myofibril assembly by promoting lateral fusion of adjacent thin fibrils into mature, wide myofibrils. Required for pseudopod elongation in transformed cells. This is Kelch-like protein 41 (KLHL41) from Homo sapiens (Human).